Reading from the N-terminus, the 294-residue chain is MASNLTVNVHPGVYMNVVDTHMRRTKSSAKNTGQEKCMGTLMGYYEKGSIQVTNCFAIPFNESNDDLEIDDQFNQQMISALKKTSPNEQPVGWFLTTSDITSSCLIYHDYYVRVITEASARRESPPIVVLTIDTTFSGDMSKRMPVRAYLRSKAGIPGAAGPHCAIFNPLRVELAAFPGELVAMQLIEKALDSRRREATLESGLEQLETSTAQMIEWLERMLHYVEDVNKNGEKPGDAQIGRQLMDIVTASSNNMQPEKLDTLVKNTLRDYVMVSYLAKLTQTQLQVHERLVSA.

One can recognise an MPN domain in the interval 7–155; it reads VNVHPGVYMN…VRAYLRSKAG (149 aa).

This sequence belongs to the eIF-3 subunit F family. As to quaternary structure, component of the eukaryotic translation initiation factor 3 (eIF-3) complex.

The protein resides in the cytoplasm. Component of the eukaryotic translation initiation factor 3 (eIF-3) complex, which is involved in protein synthesis of a specialized repertoire of mRNAs and, together with other initiation factors, stimulates binding of mRNA and methionyl-tRNAi to the 40S ribosome. The eIF-3 complex specifically targets and initiates translation of a subset of mRNAs involved in cell proliferation. This chain is Eukaryotic translation initiation factor 3 subunit F, found in Caenorhabditis elegans.